Here is a 280-residue protein sequence, read N- to C-terminus: MQEVISYIQKAVLEISNALKFPDTSYSQNQNFTGDTQLKFDVLSDEIITKTLSQCSSIKAIISEEKDEILTLNEKAKLIVAYDPLDGSSLMDVNFAIGSIFAIYEEKASAKKLRAALYSMYGARLELVICKEQPKLYRLNANNEFIFIKDLKINEKGKINATGGTQKFWEEKHAKFIKSLFDEGYRLRYSGAMVSDINQILLKGGGIFSYPATQDAPNGKLRAFFEVFPLAFIIEKAGGKTTNGKNHSLLELEFDKIHATTPCFFGSKYEISKLLKAYNE.

Residues glutamate 64, aspartate 83, leucine 85, and aspartate 86 each coordinate Mg(2+). Residues 86–89 (DGSS), tyrosine 189, and lysine 220 each bind substrate. Mg(2+) is bound at residue glutamate 226.

Belongs to the FBPase class 1 family. Homotetramer. Mg(2+) is required as a cofactor.

Its subcellular location is the cytoplasm. It catalyses the reaction beta-D-fructose 1,6-bisphosphate + H2O = beta-D-fructose 6-phosphate + phosphate. It participates in carbohydrate biosynthesis; gluconeogenesis. The sequence is that of Fructose-1,6-bisphosphatase class 1 from Campylobacter jejuni subsp. doylei (strain ATCC BAA-1458 / RM4099 / 269.97).